We begin with the raw amino-acid sequence, 456 residues long: Methylthioribose-1-phosphate isomerase (456 aa).

Residues 40–113 form a thioesterase region; sequence KGLVHGGFIF…CFKGEDKVFE (74 aa). The interval 124–456 is MTR-1-P isomerase; sequence MFWRGEKMEV…PERITEALKD (333 aa). Substrate contacts are provided by residues 176 to 178, Arg211, and Gln309; that span reads RGA. Asp350 (proton donor) is an active-site residue. 360–361 serves as a coordination point for substrate; the sequence is NK.

It belongs to the eIF-2B alpha/beta/delta subunits family. MtnA subfamily.

It carries out the reaction 5-(methylsulfanyl)-alpha-D-ribose 1-phosphate = 5-(methylsulfanyl)-D-ribulose 1-phosphate. It functions in the pathway amino-acid biosynthesis; L-methionine biosynthesis via salvage pathway; L-methionine from S-methyl-5-thio-alpha-D-ribose 1-phosphate: step 1/6. Catalyzes the interconversion of methylthioribose-1-phosphate (MTR-1-P) into methylthioribulose-1-phosphate (MTRu-1-P). This is Methylthioribose-1-phosphate isomerase (mtnA) from Aquifex aeolicus (strain VF5).